Consider the following 372-residue polypeptide: Glutamate 5-kinase (372 aa).

ATP is bound at residue lysine 14. Substrate-binding residues include serine 54, aspartate 141, and asparagine 153. 173–174 (TD) serves as a coordination point for ATP. In terms of domain architecture, PUA spans 280–358 (RGTLVLDAGA…EAIESILGYS (79 aa)).

Belongs to the glutamate 5-kinase family.

The protein resides in the cytoplasm. The enzyme catalyses L-glutamate + ATP = L-glutamyl 5-phosphate + ADP. It functions in the pathway amino-acid biosynthesis; L-proline biosynthesis; L-glutamate 5-semialdehyde from L-glutamate: step 1/2. In terms of biological role, catalyzes the transfer of a phosphate group to glutamate to form L-glutamate 5-phosphate. In Pseudomonas putida (strain ATCC 700007 / DSM 6899 / JCM 31910 / BCRC 17059 / LMG 24140 / F1), this protein is Glutamate 5-kinase.